A 535-amino-acid chain; its full sequence is RAN GTPase-activating protein 1 (535 aa).

The interval 1–115 is WPP; sequence MDHSAKTTQN…EESEVEVSKD (115 aa). 9 LRR repeats span residues 208–231, 236–259, 264–287, 320–343, 353–376, 377–400, 405–428, 433–456, and 461–488; these read GSKL…AFAS, QHDL…AVRE, TDKI…AIAE, CSHL…ALAK, EIYM…LLKS, APSL…NLAA, KQSL…LIAK, HDQL…ALAQ, and KNTF…MFKD. Residues 493–535 are disordered; it reads LVPLDDNDPEGEDFEDEDEEEEGEDGNELESKLGSLKIKQGEE. The segment covering 497–520 has biased composition (acidic residues); sequence DDNDPEGEDFEDEDEEEEGEDGNE.

It belongs to the RNA1 family. As to quaternary structure, homodimer. Interacts with WIP1 through its WPP domain. Component of Ran complexes at least composed of WIT1 or WIT2, RANGAP1 or RANGAP2, and WIP1 or WIP2 or WIP3. Interacts directly with WIT1, WIP2 and WIP3. Interacts with POK1.

The protein localises to the cytoplasm. It is found in the nucleus envelope. It localises to the nucleus membrane. The protein resides in the cytoskeleton. Its subcellular location is the spindle. The protein localises to the phragmoplast. GTPase activator for the nuclear Ras-related regulatory protein Ran, converting it to the putatively inactive GDP-bound state. Plays a role in spatial signaling during cell division. This chain is RAN GTPase-activating protein 1 (RANGAP1), found in Arabidopsis thaliana (Mouse-ear cress).